The chain runs to 469 residues: Ribulose bisphosphate carboxylase large chain (469 aa).

Positions 1–2 (MS) are excised as a propeptide. At P3 the chain carries N-acetylproline. K14 is subject to N6,N6,N6-trimethyllysine. Residues N123 and T173 each contribute to the substrate site. K175 (proton acceptor) is an active-site residue. K177 lines the substrate pocket. K201, D203, and E204 together coordinate Mg(2+). K201 bears the N6-carboxylysine mark. The active-site Proton acceptor is the H294. Substrate-binding residues include R295, H327, and S379.

The protein belongs to the RuBisCO large chain family. Type I subfamily. Heterohexadecamer of 8 large chains and 8 small chains; disulfide-linked. The disulfide link is formed within the large subunit homodimers. Mg(2+) is required as a cofactor. The disulfide bond which can form in the large chain dimeric partners within the hexadecamer appears to be associated with oxidative stress and protein turnover.

The protein localises to the plastid. It is found in the chloroplast. It catalyses the reaction 2 (2R)-3-phosphoglycerate + 2 H(+) = D-ribulose 1,5-bisphosphate + CO2 + H2O. It carries out the reaction D-ribulose 1,5-bisphosphate + O2 = 2-phosphoglycolate + (2R)-3-phosphoglycerate + 2 H(+). RuBisCO catalyzes two reactions: the carboxylation of D-ribulose 1,5-bisphosphate, the primary event in carbon dioxide fixation, as well as the oxidative fragmentation of the pentose substrate in the photorespiration process. Both reactions occur simultaneously and in competition at the same active site. The protein is Ribulose bisphosphate carboxylase large chain of Dianthus caryophyllus (Carnation).